A 1400-amino-acid polypeptide reads, in one-letter code: ABC transporter G family member 30 (1400 aa).

Asparagine 116 carries an N-linked (GlcNAc...) asparagine glycan. The 274-residue stretch at 141–414 folds into the ABC transporter 1 domain; sequence LLSEFICSKK…FEEFGFKCPE (274 aa). 174-181 serves as a coordination point for ATP; the sequence is GPPGCGKT. Asparagine 472 carries an N-linked (GlcNAc...) asparagine glycan. One can recognise an ABC transmembrane type-2 1 domain in the interval 492-704; sequence EMLKACSRRE…AEIGLTANEF (213 aa). The next 7 membrane-spanning stretches (helical) occupy residues 510-530, 553-573, 582-602, 628-648, 652-672, 679-699, and 738-758; these read FIYL…MTVF, LFRL…RLGV, FYPA…LSVL, FLIL…IAAI, IIAS…FGGF, MPAW…EIGL, and TAFG…VLAL. The region spanning 808 to 1053 is the ABC transporter 2 domain; the sequence is VTFQNVQYYI…VIEYFESFSG (246 aa). 845 to 852 provides a ligand contact to ATP; the sequence is GVSGAGKT. N-linked (GlcNAc...) asparagine glycosylation is found at asparagine 899 and asparagine 1040. In terms of domain architecture, ABC transmembrane type-2 2 spans 1125-1339; sequence VQLKACLWKQ…VLEGLLSSQY (215 aa). Transmembrane regions (helical) follow at residues 1144–1164, 1179–1199, 1228–1248, 1263–1283, 1289–1309, 1317–1337, and 1372–1392; these read HNIT…LLFW, IFGS…AAVI, VLIE…IVYP, LYSI…MVAL, MAVT…GFVI, WWIW…LLSS, and VVAF…AFFM.

It belongs to the ABC transporter superfamily. ABCG family. PDR (TC 3.A.1.205) subfamily. Confined to roots. In seeds, mainly expressed in the embryo and, to a lesser extent, in the endosperm.

It localises to the cell membrane. It carries out the reaction abscisate(out) + ATP + H2O = abscisate(in) + ADP + phosphate + H(+). Together with ABCG40, import into the embryo the abscisic acid (ABA) delivered from the endosperm via ABCG25 and ABCG31-mediated export to suppress radicle extension and subsequent embryonic growth. Involved in root secretion of phytochemicals (phenolics and sugars) which regulate soil microbiota, influencing both fungal and bacterial communities. May be a general defense protein. This Arabidopsis thaliana (Mouse-ear cress) protein is ABC transporter G family member 30.